A 351-amino-acid chain; its full sequence is Glycerol-1-phosphate dehydrogenase [NAD(P)+] (351 aa).

NAD(+)-binding positions include 97–101 and 119–122; these read GKVID and TSPS. D124 is a binding site for substrate. S128 contributes to the NAD(+) binding site. Residue D171 participates in substrate binding. Zn(2+) contacts are provided by D171 and H251. Residue H255 coordinates substrate. H267 contributes to the Zn(2+) binding site.

It belongs to the glycerol-1-phosphate dehydrogenase family. In terms of assembly, homodimer. It depends on Zn(2+) as a cofactor.

Its subcellular location is the cytoplasm. The enzyme catalyses sn-glycerol 1-phosphate + NAD(+) = dihydroxyacetone phosphate + NADH + H(+). It carries out the reaction sn-glycerol 1-phosphate + NADP(+) = dihydroxyacetone phosphate + NADPH + H(+). Its pathway is membrane lipid metabolism; glycerophospholipid metabolism. Its function is as follows. Catalyzes the NAD(P)H-dependent reduction of dihydroxyacetonephosphate (DHAP or glycerone phosphate) to glycerol 1-phosphate (G1P). The G1P thus generated is used as the glycerophosphate backbone of phospholipids in the cellular membranes of Archaea. The protein is Glycerol-1-phosphate dehydrogenase [NAD(P)+] of Saccharolobus islandicus (strain Y.N.15.51 / Yellowstone #2) (Sulfolobus islandicus).